A 375-amino-acid chain; its full sequence is Aminomethyltransferase (375 aa).

Belongs to the GcvT family. The glycine cleavage system is composed of four proteins: P, T, L and H.

It catalyses the reaction N(6)-[(R)-S(8)-aminomethyldihydrolipoyl]-L-lysyl-[protein] + (6S)-5,6,7,8-tetrahydrofolate = N(6)-[(R)-dihydrolipoyl]-L-lysyl-[protein] + (6R)-5,10-methylene-5,6,7,8-tetrahydrofolate + NH4(+). Its function is as follows. The glycine cleavage system catalyzes the degradation of glycine. The chain is Aminomethyltransferase from Cupriavidus pinatubonensis (strain JMP 134 / LMG 1197) (Cupriavidus necator (strain JMP 134)).